Consider the following 255-residue polypeptide: Small ribosomal subunit protein uS2 (255 aa).

A disordered region spans residues 226 to 255; it reads QGVSNEEVAAEQNIDLDEKEKSEETEATEE.

It belongs to the universal ribosomal protein uS2 family.

The polypeptide is Small ribosomal subunit protein uS2 (Staphylococcus aureus (strain JH1)).